Reading from the N-terminus, the 226-residue chain is Ribonuclease 3 (226 aa).

Positions 6-128 constitute an RNase III domain; the sequence is INRLQRKLGY…LIGGVFLDSN (123 aa). Residue Glu41 participates in Mg(2+) binding. Asp45 is an active-site residue. Residues Asp114 and Glu117 each contribute to the Mg(2+) site. The active site involves Glu117. The region spanning 155–225 is the DRBM domain; sequence DPKTRLQEYL…AEQALKKLEL (71 aa).

Belongs to the ribonuclease III family. As to quaternary structure, homodimer. Requires Mg(2+) as cofactor.

It localises to the cytoplasm. The enzyme catalyses Endonucleolytic cleavage to 5'-phosphomonoester.. In terms of biological role, digests double-stranded RNA. Involved in the processing of primary rRNA transcript to yield the immediate precursors to the large and small rRNAs (23S and 16S). Processes some mRNAs, and tRNAs when they are encoded in the rRNA operon. Processes pre-crRNA and tracrRNA of type II CRISPR loci if present in the organism. This Salmonella enteritidis PT4 (strain P125109) protein is Ribonuclease 3.